The following is a 598-amino-acid chain: NADH-ubiquinone oxidoreductase chain 5 (598 aa).

A run of 14 helical transmembrane segments spans residues 6–26 (LTLIMNSGALLTIIVLLPPII), 32–52 (MILTTKLVKISMFISLIPLTI), 84–100 (YTVIFTPIALMITWSIM), 113–133 (MDKFFKYLLLFLITMITFISA), 136–156 (LLQLFIGWEGVGIMSFLLISW), 241–261 (TPVSALLHSSTMVVAGVFLLI), 272–292 (LMLEMTLCLGAMTTICAALCA), 301–320 (IIAFSTSSQLGLMMVAVGLN), 325–347 (AFLHMCTHAFFKAMLFLCSGSII), 370–390 (TTCMTIGSAALMGLPFLAGFF), 409–429 (LMVTLMAVTLTTAYSSRLIIM), 456–476 (LAWGSLISGLILTSTLPPMKP), 478–498 (IFTMPTYIKTIALMMFIISLI), and 576–596 (LNSATLPLMAFALTLITLSLT).

This sequence belongs to the complex I subunit 5 family.

Its subcellular location is the mitochondrion inner membrane. The catalysed reaction is a ubiquinone + NADH + 5 H(+)(in) = a ubiquinol + NAD(+) + 4 H(+)(out). Functionally, core subunit of the mitochondrial membrane respiratory chain NADH dehydrogenase (Complex I) that is believed to belong to the minimal assembly required for catalysis. Complex I functions in the transfer of electrons from NADH to the respiratory chain. The immediate electron acceptor for the enzyme is believed to be ubiquinone. The chain is NADH-ubiquinone oxidoreductase chain 5 (MT-ND5) from Petromyzon marinus (Sea lamprey).